Consider the following 706-residue polypeptide: Solute carrier organic anion transporter family member 6C1 (706 aa).

The disordered stretch occupies residues 1–24; the sequence is MAHVRNKKSDDKKAMVVAKEDTNK. The Cytoplasmic portion of the chain corresponds to 1-94; the sequence is MAHVRNKKSD…PFVQRFNNID (94 aa). A compositionally biased stretch (basic and acidic residues) spans 7–24; it reads KKSDDKKAMVVAKEDTNK. A helical membrane pass occupies residues 95 to 118; the sequence is GFMTLYVAAVLIHGALFAVVDMTL. Residues 119–130 are Extracellular-facing; that stretch reads NIYQVQFSLTRT. A helical membrane pass occupies residues 131–151; it reads EWYLMDFSDYIASFVVAIIIA. Residues 152 to 159 lie on the Cytoplasmic side of the membrane; the sequence is HFGSKGNR. A helical membrane pass occupies residues 160–180; sequence TRWIAASCILMGLESMLFAFP. Residues 181-218 are Extracellular-facing; sequence FFTYEIIIPGRQSIELCMEENEKRNIICGNSVPNRSKC. Asn214 carries an N-linked (GlcNAc...) asparagine glycan. The chain crosses the membrane as a helical span at residues 219-241; the sequence is IYFHIAGQCIHGIAGMPIYILGI. Over 242-253 the chain is Cytoplasmic; the sequence is TFIFDHIPTSSC. The helical transmembrane segment at 254–277 threads the bilayer; it reads GFYLAIGHSAYLIGYLLGMVGGLQ. Residues 278–301 are Extracellular-facing; it reads NFQPPPKEKTVEIEPAKVYQLLQS. Residues 302 to 324 form a helical membrane-spanning segment; that stretch reads GWWKTFLIIAAISFCVSFMMVCF. The Cytoplasmic segment spans residues 325-374; it reads PTSLPGAHKLRLAKRKEPPTIDRRLKDMKIQPHLKGFLHNIWHILKNPLM. Residues 375–396 form a helical membrane-spanning segment; the sequence is LTQAICKVSEYLTFNTSLYFLP. Over 397-410 the chain is Extracellular; that stretch reads HHLQTQFLITPGIA. The helical transmembrane segment at 411–432 threads the bilayer; it reads SLLTGAFVLPGGIIGHFLGGLI. The Cytoplasmic segment spans residues 433–445; the sequence is VDRLEMTNKNKLK. The helical transmembrane segment at 446–466 threads the bilayer; sequence FTLVTTVVSVGLFLLIFFVEC. Over 467–565 the chain is Extracellular; sequence QTTTFAGINE…IAGTCDSDCL (99 aa). One can recognise a Kazal-like domain in the interval 485 to 540; sequence GNLTADCNEYCDCTTSLYTSICGRDEKEYFSPCFAGCKATKVSQTEKTYYNCSCIK. N-linked (GlcNAc...) asparagine glycosylation is present at Asn486. 3 disulfides stabilise this stretch: Cys491–Cys521, Cys497–Cys517, and Cys506–Cys538. A glycan (N-linked (GlcNAc...) asparagine) is linked at Asn535. The helical transmembrane segment at 566 to 589 threads the bilayer; that stretch reads KLPLFFAFYFSATVFSNMCSIPVI. At 590–604 the chain is on the cytoplasmic side; sequence SIILQSVPANFTSLS. The chain crosses the membrane as a helical span at residues 605-624; sequence LGVTYAIVKFVASVPAPLLF. Residues 625–652 lie on the Extracellular side of the membrane; sequence RLSSAIACIYWDNNRCGGKERCWIYNKN. Residues 653–675 form a helical membrane-spanning segment; the sequence is ILVYEFMGIWMSSQLIIVLLNIY. Over 676-706 the chain is Cytoplasmic; that stretch reads AIQIHDVVVHGEITESKTTVKDVKEQKERKA.

It belongs to the organo anion transporter (TC 2.A.60) family. In terms of assembly, component of the CatSper complex or CatSpermasome composed of the core pore-forming members CATSPER1, CATSPER2, CATSPER3 and CATSPER4 as well as auxiliary members CATSPERB, CATSPERG2, CATSPERD, CATSPERE, CATSPERZ, C2CD6/CATSPERT, SLCO6C1, TMEM249, TMEM262 and EFCAB9. HSPA1 may be an additional auxiliary complex member. The core complex members CATSPER1, CATSPER2, CATSPER3 and CATSPER4 form a heterotetrameric channel. The auxiliary CATSPERB, CATSPERG2, CATSPERD and CATSPERE subunits form a pavilion-like structure over the pore which stabilizes the complex through interactions with CATSPER4, CATSPER3, CATSPER1 and CATSPER2 respectively. SLCO6C1 interacts with CATSPERE and TMEM262/CATSPERH interacts with CATSPERB, further stabilizing the complex. C2CD6/CATSPERT interacts at least with CATSPERD and is required for targeting the CatSper complex in the flagellar membrane.

Its subcellular location is the cell projection. It localises to the cilium. The protein resides in the flagellum membrane. In terms of biological role, auxiliary component of the CatSper complex, a complex involved in sperm cell hyperactivation. This Mus musculus (Mouse) protein is Solute carrier organic anion transporter family member 6C1.